We begin with the raw amino-acid sequence, 220 residues long: Protein-L-isoaspartate O-methyltransferase (220 aa).

Residue Ser-68 is part of the active site.

Belongs to the methyltransferase superfamily. L-isoaspartyl/D-aspartyl protein methyltransferase family.

The protein localises to the cytoplasm. It carries out the reaction [protein]-L-isoaspartate + S-adenosyl-L-methionine = [protein]-L-isoaspartate alpha-methyl ester + S-adenosyl-L-homocysteine. Its function is as follows. Catalyzes the methyl esterification of L-isoaspartyl residues in peptides and proteins that result from spontaneous decomposition of normal L-aspartyl and L-asparaginyl residues. It plays a role in the repair and/or degradation of damaged proteins. The polypeptide is Protein-L-isoaspartate O-methyltransferase (Dictyoglomus thermophilum (strain ATCC 35947 / DSM 3960 / H-6-12)).